The chain runs to 198 residues: tRNA (pseudouridine(54)-N(1))-methyltransferase (198 aa).

L128 contributes to the S-adenosyl-L-methionine binding site.

Belongs to the methyltransferase superfamily. TrmY family. In terms of assembly, homodimer.

Its subcellular location is the cytoplasm. The catalysed reaction is pseudouridine(54) in tRNA + S-adenosyl-L-methionine = N(1)-methylpseudouridine(54) in tRNA + S-adenosyl-L-homocysteine + H(+). Functionally, specifically catalyzes the N1-methylation of pseudouridine at position 54 (Psi54) in tRNAs. The polypeptide is tRNA (pseudouridine(54)-N(1))-methyltransferase (Haloarcula marismortui (strain ATCC 43049 / DSM 3752 / JCM 8966 / VKM B-1809) (Halobacterium marismortui)).